The primary structure comprises 222 residues: Coiled-coil domain-containing protein 70 (222 aa).

2 coiled-coil regions span residues Leu34–Arg62 and Asn129–Trp188.

The polypeptide is Coiled-coil domain-containing protein 70 (CCDC70) (Bos taurus (Bovine)).